The sequence spans 357 residues: Histidinol-phosphate aminotransferase (357 aa).

K218 is subject to N6-(pyridoxal phosphate)lysine.

The protein belongs to the class-II pyridoxal-phosphate-dependent aminotransferase family. Histidinol-phosphate aminotransferase subfamily. In terms of assembly, homodimer. The cofactor is pyridoxal 5'-phosphate.

It carries out the reaction L-histidinol phosphate + 2-oxoglutarate = 3-(imidazol-4-yl)-2-oxopropyl phosphate + L-glutamate. It participates in amino-acid biosynthesis; L-histidine biosynthesis; L-histidine from 5-phospho-alpha-D-ribose 1-diphosphate: step 7/9. The sequence is that of Histidinol-phosphate aminotransferase from Chlorobium luteolum (strain DSM 273 / BCRC 81028 / 2530) (Pelodictyon luteolum).